A 185-amino-acid polypeptide reads, in one-letter code: ATP synthase subunit b (185 aa).

Residues 27–47 form a helical membrane-spanning segment; the sequence is GALIWKGLNILAFLGIVYYFG.

The protein belongs to the ATPase B chain family. As to quaternary structure, F-type ATPases have 2 components, F(1) - the catalytic core - and F(0) - the membrane proton channel. F(1) has five subunits: alpha(3), beta(3), gamma(1), delta(1), epsilon(1). F(0) has three main subunits: a(1), b(2) and c(10-14). The alpha and beta chains form an alternating ring which encloses part of the gamma chain. F(1) is attached to F(0) by a central stalk formed by the gamma and epsilon chains, while a peripheral stalk is formed by the delta and b chains.

Its subcellular location is the cell inner membrane. F(1)F(0) ATP synthase produces ATP from ADP in the presence of a proton or sodium gradient. F-type ATPases consist of two structural domains, F(1) containing the extramembraneous catalytic core and F(0) containing the membrane proton channel, linked together by a central stalk and a peripheral stalk. During catalysis, ATP synthesis in the catalytic domain of F(1) is coupled via a rotary mechanism of the central stalk subunits to proton translocation. In terms of biological role, component of the F(0) channel, it forms part of the peripheral stalk, linking F(1) to F(0). In Aquifex aeolicus (strain VF5), this protein is ATP synthase subunit b.